Consider the following 471-residue polypeptide: Alpha-galactosidase 1 (471 aa).

Positions 1–18 (MFAFYFLTACISLKGVFG) are cleaved as a signal peptide. The cysteines at positions 42 and 74 are disulfide-linked. Residues Asp72 and Asp73 each coordinate substrate. Asn105 carries an N-linked (GlcNAc...) asparagine glycan. Residues Cys121 and Cys151 are joined by a disulfide bond. Substrate is bound at residue Lys147. Residue Asp149 is the Nucleophile of the active site. Asn175 is a glycosylation site (N-linked (GlcNAc...) asparagine). Substrate is bound at residue Arg205. The active-site Proton donor is Asp209. Cystine bridges form between Cys221–Cys237 and Cys223–Cys230. Position 251 (Gln251) interacts with substrate. N-linked (GlcNAc...) asparagine glycans are attached at residues Asn270, Asn370, Asn403, Asn413, Asn422, Asn435, and Asn454.

It belongs to the glycosyl hydrolase 27 family. In terms of assembly, homotetramer.

It localises to the secreted. The catalysed reaction is Hydrolysis of terminal, non-reducing alpha-D-galactose residues in alpha-D-galactosides, including galactose oligosaccharides, galactomannans and galactolipids.. In Saccharomyces cerevisiae (Baker's yeast), this protein is Alpha-galactosidase 1 (MEL1).